The sequence spans 132 residues: Nuclear transition protein 2 (132 aa).

Polar residues predominate over residues 1-20; sequence MDTKTQSLPNTHAQPHSNSR. The interval 1 to 132 is disordered; the sequence is MDTKTQSLPN…KRQSSGRKYN (132 aa). His-12, His-16, His-24, Cys-29, Cys-31, and Cys-35 together coordinate Zn(2+). Positions 37–59 are enriched in basic residues; it reads SRSRSRSCRSRSSSRRPRSHRSP. The segment covering 82–94 has biased composition (polar residues); sequence SHQCPSRPVTHSC. The short motif at 105-113 is the Nuclear localization signal element; sequence GKVIKRKQV. Over residues 108–132 the composition is skewed to basic residues; sequence IKRKQVKRSKQVYKRKRQSSGRKYN. Ser-127 carries the post-translational modification Phosphoserine.

Belongs to the nuclear transition protein 2 family. Testis.

The protein localises to the nucleus. It is found in the nucleolus. Its subcellular location is the chromosome. Functionally, plays a key role in the replacement of histones to protamine in the elongating spermatids of mammals. In condensing spermatids, loaded onto the nucleosomes, where it promotes the recruitment and processing of protamines, which are responsible for histone eviction. The chain is Nuclear transition protein 2 (TNP2) from Bos taurus (Bovine).